The following is a 482-amino-acid chain: Falcipain-2b (482 aa).

The Cytoplasmic segment spans residues 1 to 35; sequence MDYHMDYIPNEVISHQGERFVDKYVDRKILKNKKS. The propeptide at 1–241 is activation peptide; the sequence is MDYHMDYIPN…PLKNSKYLLD (241 aa). Residues 16–25 carry the Bipartite vacuolar targeting signal 1 motif; that stretch reads QGERFVDKYV. The helical; Signal-anchor for type II membrane protein transmembrane segment at 36-56 threads the bilayer; it reads LLVIISLSVLSVVGFILFYFT. The Lumenal portion of the chain corresponds to 57–482; it reads PNFRKSDLFK…GTDAFIPLIE (426 aa). N-linked (GlcNAc...) asparagine glycosylation occurs at Asn67. Residues 84 to 105 carry the Bipartite vacuolar targeting signal 2 motif; that stretch reads KSPNGKKFIVSKIDEALSFYDN. The N-linked (GlcNAc...) asparagine glycan is linked to Asn117. A Nose motif; required for the correct folding of the mature form motif is present at residues 242–258; sequence QINYDAVIKKYKGNENF. 4 cysteine pairs are disulfide-bonded: Cys280–Cys321, Cys314–Cys355, Cys340–Cys360, and Cys409–Cys470. Cys283 is a catalytic residue. His415 is a catalytic residue. The short motif at 426–435 is the Arm motif; binds to host hemoglobin and required for the inhibitory interaction between the propeptide and the catalytic domain element; it reads EIVNPLTKKG.

The protein belongs to the peptidase C1 family. As to quaternary structure, component of the hemozoin formation complex (HFC) composed of falcipains FP2A and/or FP2B, plasmepsins PMII, PMIII/HAP and PMIV, heme detoxifying protein HDP and falcilysin FLN. The HFC complex is involved in hemoglobin degradation and detoxification of heme in the food vacuole during the asexual blood stage.

It is found in the vacuole. The protein resides in the membrane. In terms of biological role, cysteine protease which cleaves native host hemoglobin in the food vacuole during the asexual blood stage. Preferentially cleaves substrates which have a leucine at the P2 position. This Plasmodium falciparum (isolate 3D7) protein is Falcipain-2b.